A 99-amino-acid chain; its full sequence is Small ribosomal subunit protein bS20 (99 aa).

Belongs to the bacterial ribosomal protein bS20 family.

Binds directly to 16S ribosomal RNA. This Prochlorococcus marinus (strain SARG / CCMP1375 / SS120) protein is Small ribosomal subunit protein bS20.